A 166-amino-acid chain; its full sequence is Urease accessory protein UreE (166 aa).

The segment at 133 to 154 (QPEHGAYGGGHHHSRHGDEDFN) is disordered.

Belongs to the UreE family.

The protein resides in the cytoplasm. Involved in urease metallocenter assembly. Binds nickel. Probably functions as a nickel donor during metallocenter assembly. The protein is Urease accessory protein UreE of Pseudomonas fluorescens (strain SBW25).